A 604-amino-acid chain; its full sequence is Transcriptional repressor rco-1 (604 aa).

2 disordered regions span residues 87–110 (RGGAPGNMNPPPQHPGQQQPPAIG) and 124–264 (GGQA…DRLP). The segment covering 144-163 (MPAPPGLQGPPPPPPPPSQQ) has biased composition (pro residues). 2 stretches are compositionally biased toward low complexity: residues 164 to 177 (PPFQQQYQGPQGPG) and 190 to 209 (PGPAGKRGIGRPPAGGPATP). Polar residues predominate over residues 210-229 (QINTPIPYNGGPAQSPQVPT). WD repeat units lie at residues 295-324 (QHESVVCCVRFSMDGKYVATGCNRSAQIYD), 342-372 (TGDLYIRSVCFSPDGKYLATGAEDKLIRVWD), 384-414 (GHEQDIYSLDFSRDGRTIASGSGDRTVRLWD), 425-455 (SIEDGVTTVAISPDKQFVAAGSLDKSVRVWD), 469-499 (GHKDSVYSVAFSPDGRNLVSGSLDKTIKMWE), 523-553 (GHRDFVLSVALTPDSQWVLSGSKDRGVQFWD), and 565-600 (GHKNSVISVAPSPVTGPNGVGYFATGSGDMRARIWS).

Represses transcription by RNA polymerase II. May be involved at several stages of conidiation and other growth and development processes. Appears to regulate genes that are expressed in asexual and sexual spore pathways. The protein is Transcriptional repressor rco-1 (rco-1) of Neurospora crassa (strain ATCC 24698 / 74-OR23-1A / CBS 708.71 / DSM 1257 / FGSC 987).